The chain runs to 145 residues: MYGGDEVSAIVVDLGSHTCKAGYAGEDAPKAVFPSVVGAIDGNGMDIDDAANTTEDAKESDKEKGKRKLYTGSQALNFRRDQMEILSPTKDGIVTDWDMVDNVWDHAFRNCLMIDPTEHPMLLAEPPLNSQQQREKSGFSTFYRC.

The segment at 47 to 66 (IDDAANTTEDAKESDKEKGK) is disordered. Residues 55–64 (EDAKESDKEK) show a composition bias toward basic and acidic residues.

This sequence belongs to the actin family. ARP4 subfamily. As to expression, expressed in roots, leaves and flowers.

In Arabidopsis thaliana (Mouse-ear cress), this protein is Actin-related protein 4A (ARP4A).